The sequence spans 559 residues: uncharacterized protein (559 aa).

The segment covering 1–10 (MSGRRGDHPG) has biased composition (basic and acidic residues). The disordered stretch occupies residues 1–76 (MSGRRGDHPG…ERSRVPPRTT (76 aa)). 11 consecutive transmembrane segments (helical) span residues 128 to 148 (FAVDSAMAVALANTLFFAAAS), 155 to 175 (VALYLLITIAPFAVIAPLIGP), 186 to 206 (VALALSFGLRTALAVVLIMNY), 208 to 228 (GATGSFPSWVLYPCALAMMVF), 259 to 279 (VFGLLGGTIAGGAIAAGVEFV), 283 to 303 (LFQLPGALFVVVAITIAGASL), 358 to 378 (LWGNCTIKVMVGFLFLYPAFV), 387 to 407 (WVQLGMLGLIGAAAAVGNFAG), 428 to 448 (VLVTVLAIAAAVAGSLAATAI), 490 to 510 (LAWVLGGAVGVLVYTELWVGF), and 515 to 535 (ALLILGLAQTIVSFRGDSLIP).

To M.leprae ML2143.

The protein resides in the cell membrane. This is an uncharacterized protein from Mycobacterium tuberculosis (strain CDC 1551 / Oshkosh).